The chain runs to 562 residues: Formate--tetrahydrofolate ligase (562 aa).

An ATP-binding site is contributed by 71–78 (TPAGEGKS).

It belongs to the formate--tetrahydrofolate ligase family.

The catalysed reaction is (6S)-5,6,7,8-tetrahydrofolate + formate + ATP = (6R)-10-formyltetrahydrofolate + ADP + phosphate. Its pathway is one-carbon metabolism; tetrahydrofolate interconversion. In Bacillus cereus (strain Q1), this protein is Formate--tetrahydrofolate ligase.